Here is a 588-residue protein sequence, read N- to C-terminus: Adenine deaminase (588 aa).

The protein belongs to the metallo-dependent hydrolases superfamily. Adenine deaminase family. As to quaternary structure, homodimer. Mn(2+) is required as a cofactor.

The enzyme catalyses adenine + H2O + H(+) = hypoxanthine + NH4(+). This Shigella flexneri serotype 5b (strain 8401) protein is Adenine deaminase.